Here is a 101-residue protein sequence, read N- to C-terminus: Large ribosomal subunit protein uL23 (101 aa).

The protein belongs to the universal ribosomal protein uL23 family. Part of the 50S ribosomal subunit. Contacts protein L29, and trigger factor when it is bound to the ribosome.

Its function is as follows. One of the early assembly proteins it binds 23S rRNA. One of the proteins that surrounds the polypeptide exit tunnel on the outside of the ribosome. Forms the main docking site for trigger factor binding to the ribosome. The protein is Large ribosomal subunit protein uL23 of Histophilus somni (strain 129Pt) (Haemophilus somnus).